Here is a 678-residue protein sequence, read N- to C-terminus: Portal protein (678 aa).

The disordered stretch occupies residues 376-405 (PAVDHTLPGFGKGGTGRGSRPQDPGARPQQ). Residues 422–443 (LEGYINNLFGTIERLRETNAGL) form a putative leucine zipper motif region. Over residues 459-470 (AGALEREQRAAD) the composition is skewed to basic and acidic residues. 2 disordered regions span residues 459–480 (AGAL…AGRP) and 622–678 (PRPP…HARR). Over residues 642 to 652 (SRSRTRTRSRS) the composition is skewed to basic residues. The span at 667 to 678 (VERRDGRPHARR) shows a compositional bias: basic and acidic residues.

Belongs to the herpesviridae portal protein family. Homododecamerizes. Interacts with terminase subunits TRM1 and TRM3.

It localises to the virion. The protein resides in the host nucleus. Functionally, forms a portal in the viral capsid through which viral DNA is translocated during DNA packaging. Assembles as a dodecamer at a single fivefold axe of the T=16 icosahedric capsid. Binds to the molecular motor that translocates the viral DNA, termed terminase. The chain is Portal protein (UL6) from Homo sapiens (Human).